A 274-amino-acid chain; its full sequence is 4-deoxy-L-threo-5-hexosulose-uronate ketol-isomerase (274 aa).

The Zn(2+) site is built by His-192, His-194, Glu-199, and His-241.

This sequence belongs to the KduI family. The cofactor is Zn(2+).

It carries out the reaction 5-dehydro-4-deoxy-D-glucuronate = 3-deoxy-D-glycero-2,5-hexodiulosonate. It participates in glycan metabolism; pectin degradation; 2-dehydro-3-deoxy-D-gluconate from pectin: step 4/5. Catalyzes the isomerization of 5-dehydro-4-deoxy-D-glucuronate to 3-deoxy-D-glycero-2,5-hexodiulosonate. In Shigella boydii serotype 18 (strain CDC 3083-94 / BS512), this protein is 4-deoxy-L-threo-5-hexosulose-uronate ketol-isomerase.